The chain runs to 210 residues: Cytidylate kinase (210 aa).

9–17 (GPAAAGKGT) lines the ATP pocket.

It belongs to the cytidylate kinase family. Type 1 subfamily.

It localises to the cytoplasm. The enzyme catalyses CMP + ATP = CDP + ADP. It catalyses the reaction dCMP + ATP = dCDP + ADP. The polypeptide is Cytidylate kinase (Agrobacterium fabrum (strain C58 / ATCC 33970) (Agrobacterium tumefaciens (strain C58))).